A 430-amino-acid chain; its full sequence is Histidinol dehydrogenase (430 aa).

3 residues coordinate NAD(+): Tyr131, Gln192, and Asn215. Residues Ser238, Gln260, and His263 each coordinate substrate. Zn(2+) is bound by residues Gln260 and His263. Active-site proton acceptor residues include Glu328 and His329. Substrate is bound by residues His329, Asp362, Glu416, and His421. Position 362 (Asp362) interacts with Zn(2+). Position 421 (His421) interacts with Zn(2+).

Belongs to the histidinol dehydrogenase family. Requires Zn(2+) as cofactor.

It catalyses the reaction L-histidinol + 2 NAD(+) + H2O = L-histidine + 2 NADH + 3 H(+). Its pathway is amino-acid biosynthesis; L-histidine biosynthesis; L-histidine from 5-phospho-alpha-D-ribose 1-diphosphate: step 9/9. Functionally, catalyzes the sequential NAD-dependent oxidations of L-histidinol to L-histidinaldehyde and then to L-histidine. The protein is Histidinol dehydrogenase of Acinetobacter baylyi (strain ATCC 33305 / BD413 / ADP1).